Here is a 414-residue protein sequence, read N- to C-terminus: Transforming growth factor beta-2 proprotein (414 aa).

The first 19 residues, Met1–Leu19, serve as a signal peptide directing secretion. 3 N-linked (GlcNAc...) asparagine glycosylation sites follow: Asn72, Asn140, and Asn241. 4 disulfides stabilise this stretch: Cys309–Cys318, Cys317–Cys380, Cys346–Cys411, and Cys350–Cys413.

The protein belongs to the TGF-beta family. Interacts with the serine proteases, HTRA1 and HTRA3. Interacts with ASPN. Interacts with MFAP5. As to quaternary structure, interacts with Transforming growth factor beta-2 (TGF-beta-2) chain; interaction is non-covalent and maintains (TGF-beta-2) in a latent state. Interacts with LRRC32/GARP; leading to regulate activation of TGF-beta-2. Interacts with NREP; the interaction results in a decrease in TGFB2 autoinduction. In terms of assembly, transforming growth factor beta-2: Homodimer; disulfide-linked. Transforming growth factor beta-2: Interacts with TGF-beta receptors (TGFBR1 and TGFBR2), leading to signal transduction. In terms of processing, the precursor proprotein is cleaved in the Golgi apparatus to form Transforming growth factor beta-2 (TGF-beta-2) and Latency-associated peptide (LAP) chains, which remain non-covalently linked, rendering TGF-beta-2 inactive.

It localises to the secreted. It is found in the extracellular space. The protein localises to the extracellular matrix. Precursor of the Latency-associated peptide (LAP) and Transforming growth factor beta-2 (TGF-beta-2) chains, which constitute the regulatory and active subunit of TGF-beta-2, respectively. In terms of biological role, required to maintain the Transforming growth factor beta-2 (TGF-beta-2) chain in a latent state during storage in extracellular matrix. Associates non-covalently with TGF-beta-2 and regulates its activation via interaction with 'milieu molecules', such as LTBP1 and LRRC32/GARP, that control activation of TGF-beta-2. Its function is as follows. Multifunctional protein that regulates various processes such as angiogenesis and heart development. Activation into mature form follows different steps: following cleavage of the proprotein in the Golgi apparatus, Latency-associated peptide (LAP) and Transforming growth factor beta-2 (TGF-beta-2) chains remain non-covalently linked rendering TGF-beta-2 inactive during storage in extracellular matrix. At the same time, LAP chain interacts with 'milieu molecules', such as LTBP1 and LRRC32/GARP, that control activation of TGF-beta-2 and maintain it in a latent state during storage in extracellular milieus. Once activated following release of LAP, TGF-beta-2 acts by binding to TGF-beta receptors (TGFBR1 and TGFBR2), which transduce signal. The chain is Transforming growth factor beta-2 proprotein (TGFB2) from Chlorocebus aethiops (Green monkey).